The chain runs to 211 residues: Proteasome subunit beta (211 aa).

A propeptide spans 1-9 (MDNDKYLKG) (removed in mature form; by autocatalysis). T10 serves as the catalytic Nucleophile.

The protein belongs to the peptidase T1B family. As to quaternary structure, the 20S proteasome core is composed of 14 alpha and 14 beta subunits that assemble into four stacked heptameric rings, resulting in a barrel-shaped structure. The two inner rings, each composed of seven catalytic beta subunits, are sandwiched by two outer rings, each composed of seven alpha subunits. The catalytic chamber with the active sites is on the inside of the barrel. Has a gated structure, the ends of the cylinder being occluded by the N-termini of the alpha-subunits. Is capped at one or both ends by the proteasome regulatory ATPase, PAN.

It is found in the cytoplasm. The catalysed reaction is Cleavage of peptide bonds with very broad specificity.. Its activity is regulated as follows. The formation of the proteasomal ATPase PAN-20S proteasome complex, via the docking of the C-termini of PAN into the intersubunit pockets in the alpha-rings, triggers opening of the gate for substrate entry. Interconversion between the open-gate and close-gate conformations leads to a dynamic regulation of the 20S proteasome proteolysis activity. Functionally, component of the proteasome core, a large protease complex with broad specificity involved in protein degradation. This Methanosarcina barkeri (strain Fusaro / DSM 804) protein is Proteasome subunit beta.